We begin with the raw amino-acid sequence, 408 residues long: MDNSAIFEEFNSKKISQDDLEATITSLNNYFVKLNDLNNQYINLIRQDNIDKIEKQNIRQQQKQVKVEIKKISATTKLFKQNLKLAESLYKKIKLTNNQDDINKAKHEVEIAKSMLLQLKEVINGQGKSIKLKKLSDIAIEINHLSFKYGPEFPNAIDDVSFTINQGEYVTIIGHNGSGKSTISKILIGVLNAQHGEIKIFGNIVNDHNIEQARKFLGIVFQNPDNQFIGSTVEADIAFGLENKRIDPKKMPDIILDSAKKVGMEWALKKEPLNLSGGQKQRVAIASTLALDPDIMIFDEATSMLDPKGKREIKEIMVQLRETRTKTILSITHDMDEILNADKVIVLDHGKLVRVAKPLEIVEDKDFLRNIQLDVPFVGLVREELEKKGIKIASTQNIDELVEQICKK.

The region spanning 140-374 (IEINHLSFKY…KDFLRNIQLD (235 aa)) is the ABC transporter domain. 174–181 (GHNGSGKS) contributes to the ATP binding site.

It belongs to the ABC transporter superfamily. Energy-coupling factor EcfA family. Forms a stable energy-coupling factor (ECF) transporter complex composed of 2 membrane-embedded substrate-binding proteins (S component), 2 ATP-binding proteins (A component) and 2 transmembrane proteins (T component).

Its subcellular location is the cell membrane. In terms of biological role, ATP-binding (A) component of a common energy-coupling factor (ECF) ABC-transporter complex. Unlike classic ABC transporters this ECF transporter provides the energy necessary to transport a number of different substrates. The sequence is that of Energy-coupling factor transporter ATP-binding protein EcfA1 from Mycoplasma mycoides subsp. mycoides SC (strain CCUG 32753 / NCTC 10114 / PG1).